The sequence spans 66 residues: Large ribosomal subunit protein bL35 (66 aa).

Residues 18-27 (ATGKIKSTQS) are compositionally biased toward polar residues. Residues 18-41 (ATGKIKSTQSAKRHGMTKRSKRSI) are disordered. Residues 28–41 (AKRHGMTKRSKRSI) show a composition bias toward basic residues.

The protein belongs to the bacterial ribosomal protein bL35 family.

The protein is Large ribosomal subunit protein bL35 of Ehrlichia ruminantium (strain Gardel).